Here is a 239-residue protein sequence, read N- to C-terminus: MQRPSGRNPQALRPIRITRRYTKHAEGSVLIEFGDTKVICTASVVAGVPSFLRGQGQGWLTAEYGMLPRSTGTRMDREAARGKQQGRTVEIQRLIGRSLRAAIDLNALGENTIHLDCDVIQADGGTRTASITGAWVALADAVAWLKAEGRVTDEPLKRAIASVSVGIYQGVPVLDLDYPEDSAADTDMNVVMGDDGGIIEIQGTAEAEPFTEAEFAAMLSLAKQGIGQLHQLQQQALSH.

Phosphate-binding positions include Arg87 and 125 to 127; that span reads GTR.

Belongs to the RNase PH family. As to quaternary structure, homohexameric ring arranged as a trimer of dimers.

It catalyses the reaction tRNA(n+1) + phosphate = tRNA(n) + a ribonucleoside 5'-diphosphate. In terms of biological role, phosphorolytic 3'-5' exoribonuclease that plays an important role in tRNA 3'-end maturation. Removes nucleotide residues following the 3'-CCA terminus of tRNAs; can also add nucleotides to the ends of RNA molecules by using nucleoside diphosphates as substrates, but this may not be physiologically important. Probably plays a role in initiation of 16S rRNA degradation (leading to ribosome degradation) during starvation. This chain is Ribonuclease PH, found in Cellvibrio japonicus (strain Ueda107) (Pseudomonas fluorescens subsp. cellulosa).